A 143-amino-acid chain; its full sequence is Auxin-responsive protein SAUR67 (143 aa).

This sequence belongs to the ARG7 family.

Its subcellular location is the cell membrane. Its function is as follows. May promote auxin-stimulated organ elongation, such as hypocotyls, stamen filaments and petals. The protein is Auxin-responsive protein SAUR67 of Arabidopsis thaliana (Mouse-ear cress).